The primary structure comprises 424 residues: UDP-N-acetylglucosamine 1-carboxyvinyltransferase (424 aa).

22-23 (KN) contributes to the phosphoenolpyruvate binding site. R96 is a binding site for UDP-N-acetyl-alpha-D-glucosamine. Catalysis depends on C120, which acts as the Proton donor. A 2-(S-cysteinyl)pyruvic acid O-phosphothioketal modification is found at C120. Residues 125–129 (RPVDQ), D312, and I334 contribute to the UDP-N-acetyl-alpha-D-glucosamine site.

The protein belongs to the EPSP synthase family. MurA subfamily.

Its subcellular location is the cytoplasm. The enzyme catalyses phosphoenolpyruvate + UDP-N-acetyl-alpha-D-glucosamine = UDP-N-acetyl-3-O-(1-carboxyvinyl)-alpha-D-glucosamine + phosphate. It participates in cell wall biogenesis; peptidoglycan biosynthesis. Its function is as follows. Cell wall formation. Adds enolpyruvyl to UDP-N-acetylglucosamine. This chain is UDP-N-acetylglucosamine 1-carboxyvinyltransferase, found in Polynucleobacter necessarius subsp. necessarius (strain STIR1).